Consider the following 1071-residue polypeptide: DNA-directed RNA polymerase subunit beta (1071 aa).

It belongs to the RNA polymerase beta chain family. In plastids the minimal PEP RNA polymerase catalytic core is composed of four subunits: alpha, beta, beta', and beta''. When a (nuclear-encoded) sigma factor is associated with the core the holoenzyme is formed, which can initiate transcription.

The protein resides in the plastid. It localises to the chloroplast. The enzyme catalyses RNA(n) + a ribonucleoside 5'-triphosphate = RNA(n+1) + diphosphate. DNA-dependent RNA polymerase catalyzes the transcription of DNA into RNA using the four ribonucleoside triphosphates as substrates. The sequence is that of DNA-directed RNA polymerase subunit beta from Acorus calamus (Sweet flag).